Here is a 404-residue protein sequence, read N- to C-terminus: Argininosuccinate synthase (404 aa).

ATP contacts are provided by residues 10–18 (AYSGGLDTS) and Ala37. 2 residues coordinate L-citrulline: Tyr90 and Ser95. Gly120 is a binding site for ATP. 3 residues coordinate L-aspartate: Thr122, Asn126, and Asp127. An L-citrulline-binding site is contributed by Asn126. L-citrulline is bound by residues Arg130, Ser180, Ser189, Glu265, and Tyr277.

This sequence belongs to the argininosuccinate synthase family. Type 1 subfamily. Homotetramer.

The protein localises to the cytoplasm. It carries out the reaction L-citrulline + L-aspartate + ATP = 2-(N(omega)-L-arginino)succinate + AMP + diphosphate + H(+). It functions in the pathway amino-acid biosynthesis; L-arginine biosynthesis; L-arginine from L-ornithine and carbamoyl phosphate: step 2/3. The chain is Argininosuccinate synthase from Helicobacter hepaticus (strain ATCC 51449 / 3B1).